A 311-amino-acid polypeptide reads, in one-letter code: Malate dehydrogenase (311 aa).

Residues 7-13 (GAAGGIG) and D34 contribute to the NAD(+) site. Substrate contacts are provided by R81 and R87. Residues N94 and 117 to 119 (ITN) each bind NAD(+). The substrate site is built by N119 and R153. Residue H177 is the Proton acceptor of the active site. Residue M227 coordinates NAD(+).

It belongs to the LDH/MDH superfamily. MDH type 1 family. In terms of assembly, homodimer.

The enzyme catalyses (S)-malate + NAD(+) = oxaloacetate + NADH + H(+). Catalyzes the reversible oxidation of malate to oxaloacetate. The polypeptide is Malate dehydrogenase (Aliivibrio fischeri (strain MJ11) (Vibrio fischeri)).